Consider the following 255-residue polypeptide: uncharacterized protein (255 aa).

Residues 1–23 (MKRLNKLVLGIIFLFLVISITAG) form the signal peptide. The N-palmitoyl cysteine moiety is linked to residue C24. Residue C24 is the site of S-diacylglycerol cysteine attachment.

Belongs to the staphylococcal tandem lipoprotein family.

It is found in the cell membrane. This is an uncharacterized protein from Staphylococcus aureus (strain USA300).